Reading from the N-terminus, the 111-residue chain is Translation initiation factor 1A (111 aa).

The region spanning 11-83 is the S1-like domain; the sequence is KKIRLPKEGE…ERADVTWRYT (73 aa).

The protein belongs to the eIF-1A family.

In terms of biological role, seems to be required for maximal rate of protein biosynthesis. Enhances ribosome dissociation into subunits and stabilizes the binding of the initiator Met-tRNA(I) to 40 S ribosomal subunits. The polypeptide is Translation initiation factor 1A (eIF1A) (Methanopyrus kandleri (strain AV19 / DSM 6324 / JCM 9639 / NBRC 100938)).